A 224-amino-acid polypeptide reads, in one-letter code: uncharacterized protein (224 aa).

The helical transmembrane segment at 21–41 (LTVILIIPIVYLGVCGCFEIV) threads the bilayer.

Its subcellular location is the membrane. This is an uncharacterized protein from Methanocaldococcus jannaschii (strain ATCC 43067 / DSM 2661 / JAL-1 / JCM 10045 / NBRC 100440) (Methanococcus jannaschii).